A 127-amino-acid chain; its full sequence is Small ribosomal subunit protein uS13 (127 aa).

Residues 95–118 (GLPVRGQRTHTNARTRKGPKKGLV) are compositionally biased toward basic residues. The interval 95–127 (GLPVRGQRTHTNARTRKGPKKGLVRKAAAPAPK) is disordered.

The protein belongs to the universal ribosomal protein uS13 family. As to quaternary structure, part of the 30S ribosomal subunit. Forms a loose heterodimer with protein S19. Forms two bridges to the 50S subunit in the 70S ribosome.

Its function is as follows. Located at the top of the head of the 30S subunit, it contacts several helices of the 16S rRNA. In the 70S ribosome it contacts the 23S rRNA (bridge B1a) and protein L5 of the 50S subunit (bridge B1b), connecting the 2 subunits; these bridges are implicated in subunit movement. Contacts the tRNAs in the A and P-sites. This chain is Small ribosomal subunit protein uS13, found in Anaeromyxobacter sp. (strain Fw109-5).